The chain runs to 245 residues: Orotidine 5'-phosphate decarboxylase (245 aa).

Substrate contacts are provided by residues aspartate 22, lysine 44, 71–80 (DLKFHDIPNT), threonine 131, arginine 192, glutamine 201, glycine 221, and arginine 222. Lysine 73 acts as the Proton donor in catalysis.

Belongs to the OMP decarboxylase family. Type 1 subfamily. Homodimer.

The catalysed reaction is orotidine 5'-phosphate + H(+) = UMP + CO2. The protein operates within pyrimidine metabolism; UMP biosynthesis via de novo pathway; UMP from orotate: step 2/2. Its function is as follows. Catalyzes the decarboxylation of orotidine 5'-monophosphate (OMP) to uridine 5'-monophosphate (UMP). This Salmonella typhi protein is Orotidine 5'-phosphate decarboxylase.